Reading from the N-terminus, the 123-residue chain is DPEP2 neighbor protein (123 aa).

The tract at residues alanine 67–glycine 123 is disordered. Residues lysine 105–threonine 117 are compositionally biased toward basic residues.

This chain is DPEP2 neighbor protein, found in Homo sapiens (Human).